Here is a 61-residue protein sequence, read N- to C-terminus: ADDRNPLEQCFRETDYEEFLEIARNNLKATSNPKHVVIVGAGMAGLSAAYVLSGGGHQVTV.

Position 43–44 (43–44) interacts with FAD; sequence MA.

Belongs to the flavin monoamine oxidase family. FIG1 subfamily. In terms of assembly, homodimer; non-covalently linked. It depends on FAD as a cofactor. Post-translationally, N-glycosylated. As to expression, expressed by the venom gland.

It localises to the secreted. The enzyme catalyses an L-alpha-amino acid + O2 + H2O = a 2-oxocarboxylate + H2O2 + NH4(+). The catalysed reaction is L-leucine + O2 + H2O = 4-methyl-2-oxopentanoate + H2O2 + NH4(+). Catalyzes an oxidative deamination of predominantly hydrophobic and aromatic L-amino acids, thus producing hydrogen peroxide that may contribute to the diverse toxic effects of this enzyme. Shows activity on L-Leu. Exhibits diverse biological activities, such as apoptosis, antibacterial activities against both Gram-negative and Gram-positive bacteria and antiparasitic activities, as well as induction of platelet aggregation. Effects of snake L-amino oxidases on platelets are controversial, since they either induce aggregation or inhibit agonist-induced aggregation. These different effects are probably due to different experimental conditions. This protein may also induce hemorrhage, hemolysis, and edema. This is L-amino-acid oxidase from Crotalus durissus cascavella (Northeastern Brazilian rattlesnake).